Here is a 264-residue protein sequence, read N- to C-terminus: 3-methyl-2-oxobutanoate hydroxymethyltransferase (264 aa).

Mg(2+) contacts are provided by aspartate 45 and aspartate 84. 3-methyl-2-oxobutanoate contacts are provided by residues 45 to 46 (DS), aspartate 84, and lysine 112. Glutamate 114 serves as a coordination point for Mg(2+). Glutamate 181 functions as the Proton acceptor in the catalytic mechanism.

It belongs to the PanB family. In terms of assembly, homodecamer; pentamer of dimers. Mg(2+) is required as a cofactor.

The protein resides in the cytoplasm. It carries out the reaction 3-methyl-2-oxobutanoate + (6R)-5,10-methylene-5,6,7,8-tetrahydrofolate + H2O = 2-dehydropantoate + (6S)-5,6,7,8-tetrahydrofolate. It functions in the pathway cofactor biosynthesis; (R)-pantothenate biosynthesis; (R)-pantoate from 3-methyl-2-oxobutanoate: step 1/2. Its function is as follows. Catalyzes the reversible reaction in which hydroxymethyl group from 5,10-methylenetetrahydrofolate is transferred onto alpha-ketoisovalerate to form ketopantoate. The protein is 3-methyl-2-oxobutanoate hydroxymethyltransferase of Shewanella oneidensis (strain ATCC 700550 / JCM 31522 / CIP 106686 / LMG 19005 / NCIMB 14063 / MR-1).